A 435-amino-acid chain; its full sequence is MTEITLTAPKRLRGVIQVPGDKSISHRSVLLNAIATGSAHITNFLPGADCLSSVACVRSLGVTVEQPHERELIIHGVGLGGLRESTDVLDCGNSGTTLRLLAGILSGQPFFSVLSGDSSLRSRPQRRVVGPLRAMGAQIDGRADGDRAPLAIRGSTLRGGQYELTIASAQVKSALLLAALYADGPLTLGGRIDSRDHTERMLAAMGVEITVSPDRITLHPPTAATAPVALSLRVPGDPSSAAFWWVAAAIHPDAELVTPGVCLNPTRTGALDVLRAMGAEIEIMNERLEGSELVGDVVVRSSVLRGTTIAGSLIPRLIDEIPVLAVAAACADGETVIRDAQELRAKETDRITTVAAGLSALGVTVEPTIDGMVITGKPDQLTGATLHSYHDHRLAMAWAVAALVARGETTIVEPAAVVISYPDFWQTLAAIQEDV.

3-phosphoshikimate contacts are provided by lysine 22, serine 23, and arginine 27. Residue lysine 22 participates in phosphoenolpyruvate binding. Glycine 95 and arginine 123 together coordinate phosphoenolpyruvate. 3-phosphoshikimate is bound by residues serine 168, glutamine 170, aspartate 319, and lysine 346. Phosphoenolpyruvate is bound at residue glutamine 170. The active-site Proton acceptor is the aspartate 319. Residues arginine 350 and arginine 393 each contribute to the phosphoenolpyruvate site.

Belongs to the EPSP synthase family. As to quaternary structure, monomer.

It localises to the cytoplasm. It catalyses the reaction 3-phosphoshikimate + phosphoenolpyruvate = 5-O-(1-carboxyvinyl)-3-phosphoshikimate + phosphate. It functions in the pathway metabolic intermediate biosynthesis; chorismate biosynthesis; chorismate from D-erythrose 4-phosphate and phosphoenolpyruvate: step 6/7. Catalyzes the transfer of the enolpyruvyl moiety of phosphoenolpyruvate (PEP) to the 5-hydroxyl of shikimate-3-phosphate (S3P) to produce enolpyruvyl shikimate-3-phosphate and inorganic phosphate. The chain is 3-phosphoshikimate 1-carboxyvinyltransferase from Chloroflexus aggregans (strain MD-66 / DSM 9485).